The following is a 214-amino-acid chain: Alkaline phosphatase-like protein (214 aa).

4 helical membrane passes run Glu-3–Ile-23, Leu-48–Leu-68, Phe-141–Ala-161, and Tyr-177–Val-197.

The protein belongs to the DedA family.

It localises to the cell membrane. The sequence is that of Alkaline phosphatase-like protein (apl) from Lactococcus lactis subsp. cremoris (strain MG1363).